A 171-amino-acid polypeptide reads, in one-letter code: Large ribosomal subunit protein bL9 (171 aa).

Belongs to the bacterial ribosomal protein bL9 family.

Binds to the 23S rRNA. The polypeptide is Large ribosomal subunit protein bL9 (Rickettsia conorii (strain ATCC VR-613 / Malish 7)).